A 208-amino-acid polypeptide reads, in one-letter code: 3-demethoxyubiquinol 3-hydroxylase (208 aa).

6 residues coordinate Fe cation: Glu-57, Glu-87, His-90, Glu-139, Glu-171, and His-174.

Belongs to the COQ7 family. Fe cation serves as cofactor.

The protein localises to the cell membrane. It catalyses the reaction a 5-methoxy-2-methyl-3-(all-trans-polyprenyl)benzene-1,4-diol + AH2 + O2 = a 3-demethylubiquinol + A + H2O. It participates in cofactor biosynthesis; ubiquinone biosynthesis. Functionally, catalyzes the hydroxylation of 2-nonaprenyl-3-methyl-6-methoxy-1,4-benzoquinol during ubiquinone biosynthesis. In Janthinobacterium sp. (strain Marseille) (Minibacterium massiliensis), this protein is 3-demethoxyubiquinol 3-hydroxylase.